A 450-amino-acid chain; its full sequence is tRNA modification GTPase MnmE (450 aa).

Arginine 25, glutamate 83, and lysine 122 together coordinate (6S)-5-formyl-5,6,7,8-tetrahydrofolate. The region spanning 218–377 (GFKVAIIGKP…QMEALLDSIG (160 aa)) is the TrmE-type G domain. Residue asparagine 228 participates in K(+) binding. GTP contacts are provided by residues 228–233 (NVGKSS), 247–253 (SDIAGTT), and 272–275 (DTAG). Serine 232 contacts Mg(2+). The K(+) site is built by serine 247, isoleucine 249, and threonine 252. Threonine 253 contributes to the Mg(2+) binding site. Lysine 450 is a (6S)-5-formyl-5,6,7,8-tetrahydrofolate binding site.

It belongs to the TRAFAC class TrmE-Era-EngA-EngB-Septin-like GTPase superfamily. TrmE GTPase family. In terms of assembly, homodimer. Heterotetramer of two MnmE and two MnmG subunits. K(+) serves as cofactor.

The protein resides in the cytoplasm. Its function is as follows. Exhibits a very high intrinsic GTPase hydrolysis rate. Involved in the addition of a carboxymethylaminomethyl (cmnm) group at the wobble position (U34) of certain tRNAs, forming tRNA-cmnm(5)s(2)U34. The chain is tRNA modification GTPase MnmE from Sulfurovum sp. (strain NBC37-1).